The primary structure comprises 278 residues: Envelope glycoprotein L (278 aa).

An N-terminal signal peptide occupies residues 1 to 30 (MCRRPDCGFSFSPGPVILLWCCLLLPIVSS). One can recognise a gL betaherpesvirus-type domain in the interval 43 to 256 (VPAECPELTR…DKYYAGLPPE (214 aa)). An intrachain disulfide couples Cys-154 to Cys-159.

It belongs to the herpesviridae glycoprotein L (gL) family. Betaherpesvirinae gL subfamily. As to quaternary structure, interacts with glycoprotein H (gH); this interaction is necessary for the correct processing and cell surface expression of gH. Forms the envelope pentamer complex (PC) composed of gH, gL, UL128, UL130, and UL131A. The pentamer interacts with host NRP2. Forms the envelope trimer complex composed of gH, gL, and gO. The trimer interacts with host PDGFRA. The trimer also interacts with host EPHA2.

The protein localises to the virion membrane. It is found in the host cell membrane. The protein resides in the host Golgi apparatus. Its subcellular location is the host trans-Golgi network. Its function is as follows. The heterodimer glycoprotein H-glycoprotein L is required for the fusion of viral and plasma membranes leading to virus entry into the host cell. Acts as a functional inhibitor of gH and maintains gH in an inhibited form. Upon binding to host integrins, gL dissociates from gH leading to activation of the viral fusion glycoproteins gB and gH. In human cytomegalovirus, forms two distincts complexes to mediate viral entry, a trimer and a pentamer at the surface of the virion envelope. The gH-gL-gO trimer is required for infection in fibroblasts by interacting with host PDGFRA, and in glioblastoma cells by interacting with host EPHA2. The gH-gL-UL128-UL130-UL131A pentamer is essential for viral entry in epithelial, endothelial and myeloid cells via interaction with host NRP2. The protein is Envelope glycoprotein L of Human cytomegalovirus (strain 5160) (HHV-5).